The primary structure comprises 493 residues: MLNGWGRGDLRSGLCLWICGFLAFFKGSRGCVSEEQLFHTLFAHYNRFIRPVENVSDPVTVHFELAITQLANVDEVNQIMETNLWLRHVWKDYRLCWDPTEYDGIETLRVPADNIWKPDIVLYNNAVGDFQVEGKTKALLKYDGVITWTPPAIFKSSCPMDITFFPFDHQNCSLKFGSWTYDKAEIDLLIIGSKVDMNDFWENSEWEIVDASGYKHDIKYNCCEEIYTDITYSFYIRRLPMFYTINLIIPCLFISFLTVLVFYLPSDCGEKVTLCISVLLSLTVFLLVITETIPSTSLVIPLVGEYLLFTMIFVTLSIVVTVFVLNIHYRTPATHTMPKWVKTMFLQVFPSILMMRRPLDKTKEMDGVKDPKTHTKRPAKVKFTHRKEPKLLKECRHCHKSSEIAPGKRLSQQPAQWVTENSEHPPDVEDVIDSVQFIAENMKSHNETKEVEDDWKYMAMVVDRVFLWVFIIVCVFGTVGLFLQPLLGNTGAS.

Residues 1–30 (MLNGWGRGDLRSGLCLWICGFLAFFKGSRG) form the signal peptide. Over 31 to 240 (CVSEEQLFHT…TYSFYIRRLP (210 aa)) the chain is Extracellular. N-linked (GlcNAc...) asparagine glycans are attached at residues N54 and N171. 2 disulfides stabilise this stretch: C158/C172 and C222/C223. Transmembrane regions (helical) follow at residues 241-265 (MFYT…FYLP), 272-290 (VTLC…LVIT), and 306-327 (YLLF…VLNI). Residues 328 to 464 (HYRTPATHTM…WKYMAMVVDR (137 aa)) are Cytoplasmic-facing. Phosphoserine is present on S401. A helical membrane pass occupies residues 465–484 (VFLWVFIIVCVFGTVGLFLQ).

Belongs to the ligand-gated ion channel (TC 1.A.9) family. Acetylcholine receptor (TC 1.A.9.1) subfamily. Alpha-6/CHRNA6 sub-subfamily. As to quaternary structure, neuronal AChR is composed of two different types of subunits: alpha and non-alpha (beta). CHRNA6/alpha-6 subunit can be combined to CHRNB2/beta-2 and CHRNA4/alpha-4 to give rise to functional receptors. Interacts with LYPD6. As to expression, predominantly expressed in only a few brain areas, including dopaminergic neurons, norepirephrine neurons and cells of the visual system.

The protein localises to the synaptic cell membrane. It carries out the reaction Ca(2+)(in) = Ca(2+)(out). It catalyses the reaction K(+)(in) = K(+)(out). The catalysed reaction is Na(+)(in) = Na(+)(out). Activated by a myriad of ligands such as acetylcholine, cytisine and nicotine. CHRNA6 nAChR activity is inhibited by the antagonists alpha-conotoxin MII and PIA, a small disulfide-constrained peptides from cone snails. Its function is as follows. Component of neuronal acetylcholine receptors (nAChRs) that function as pentameric, ligand-gated cation channels with high calcium permeability among other activities. nAChRs are excitatory neurotrasnmitter receptors formed by a collection of nAChR subunits known to mediate synaptic transmission in the nervous system and the neuromuscular junction. Each nAchR subunit confers differential attributes to channel properties, including activation, deactivation and desensitization kinetics, pH sensitivity, cation permeability, and binding to allosteric modulators. CHRNA6 forms pentameric channels with CHRNB2 and CHRNA4 that exhibit high sensitivity to ACh and nicotine and are predominantly expressed in only a few brain areas, including dopaminergic neurons, norepirephrine neurons and cells of the visual system. nAChrs containing CHRNA6 subunits mediate endogenous cholinergic modulation of dopamine and gamma-aminobutyric acid (GABA) release in response to nicotine at nerve terminals. This is Neuronal acetylcholine receptor subunit alpha-6 (Chrna6) from Rattus norvegicus (Rat).